The following is a 119-amino-acid chain: Flagellar transcriptional regulator FlhD (119 aa).

This sequence belongs to the FlhD family. In terms of assembly, homodimer; disulfide-linked. Forms a heterohexamer composed of two FlhC and four FlhD subunits. Each FlhC binds a FlhD dimer, forming a heterotrimer, and a hexamer assembles by dimerization of two heterotrimers.

The protein resides in the cytoplasm. Functionally, functions in complex with FlhC as a master transcriptional regulator that regulates transcription of several flagellar and non-flagellar operons by binding to their promoter region. Activates expression of class 2 flagellar genes, including fliA, which is a flagellum-specific sigma factor that turns on the class 3 genes. Also regulates genes whose products function in a variety of physiological pathways. The protein is Flagellar transcriptional regulator FlhD of Enterobacter sp. (strain 638).